The sequence spans 110 residues: Large ribosomal subunit protein uL22 (110 aa).

It belongs to the universal ribosomal protein uL22 family. In terms of assembly, part of the 50S ribosomal subunit.

In terms of biological role, this protein binds specifically to 23S rRNA; its binding is stimulated by other ribosomal proteins, e.g. L4, L17, and L20. It is important during the early stages of 50S assembly. It makes multiple contacts with different domains of the 23S rRNA in the assembled 50S subunit and ribosome. Functionally, the globular domain of the protein is located near the polypeptide exit tunnel on the outside of the subunit, while an extended beta-hairpin is found that lines the wall of the exit tunnel in the center of the 70S ribosome. The protein is Large ribosomal subunit protein uL22 of Variovorax paradoxus (strain S110).